The sequence spans 117 residues: Protein Rev (117 aa).

2 positions are modified to phosphoserine; by host CK2: S5 and S8. The segment at L18–N26 is homomultimerization. The tract at residues Q24–R49 is disordered. The Nuclear localization signal and RNA-binding (RRE) signature appears at T35–R51. Residues Q37–R49 show a composition bias toward basic residues. The Nuclear export signal and binding to XPO1 motif lies at L74–N85. Phosphoserine; by host is present on residues S93 and S100. Polar residues predominate over residues S93–V105. The tract at residues S93–E117 is disordered.

This sequence belongs to the HIV-1 REV protein family. In terms of assembly, homomultimer; when bound to the RRE. Multimeric assembly is essential for activity and may involve XPO1. Binds to human KPNB1, XPO1, TNPO1, RANBP5 and IPO7. Interacts with the viral Integrase. Interacts with human KHDRBS1. Interacts with human NAP1; this interaction decreases Rev multimerization and stimulates its activity. Interacts with human DEAD-box helicases DDX3 and DDX24; these interactions may serve for viral RNA export to the cytoplasm and packaging, respectively. Interacts with human PSIP1; this interaction may inhibit HIV-1 DNA integration by promoting dissociation of the Integrase-LEDGF/p75 complex. In terms of processing, asymmetrically arginine dimethylated at one site by host PRMT6. Methylation impairs the RNA-binding activity and export of viral RNA from the nucleus to the cytoplasm. Post-translationally, phosphorylated by protein kinase CK2. Presence of, and maybe binding to the N-terminus of the regulatory beta subunit of CK2 is necessary for CK2-mediated Rev's phosphorylation.

The protein localises to the host nucleus. It is found in the host nucleolus. Its subcellular location is the host cytoplasm. In terms of biological role, escorts unspliced or incompletely spliced viral pre-mRNAs (late transcripts) out of the nucleus of infected cells. These pre-mRNAs carry a recognition sequence called Rev responsive element (RRE) located in the env gene, that is not present in fully spliced viral mRNAs (early transcripts). This function is essential since most viral proteins are translated from unspliced or partially spliced pre-mRNAs which cannot exit the nucleus by the pathway used by fully processed cellular mRNAs. Rev itself is translated from a fully spliced mRNA that readily exits the nucleus. Rev's nuclear localization signal (NLS) binds directly to KPNB1/Importin beta-1 without previous binding to KPNA1/Importin alpha-1. KPNB1 binds to the GDP bound form of RAN (Ran-GDP) and targets Rev to the nucleus. In the nucleus, the conversion from Ran-GDP to Ran-GTP dissociates Rev from KPNB1 and allows Rev's binding to the RRE in viral pre-mRNAs. Rev multimerization on the RRE via cooperative assembly exposes its nuclear export signal (NES) to the surface. Rev can then form a complex with XPO1/CRM1 and Ran-GTP, leading to nuclear export of the complex. Conversion from Ran-GTP to Ran-GDP mediates dissociation of the Rev/RRE/XPO1/RAN complex, so that Rev can return to the nucleus for a subsequent round of export. Beside KPNB1, also seems to interact with TNPO1/Transportin-1, RANBP5/IPO5 and IPO7/RANBP7 for nuclear import. The nucleoporin-like HRB/RIP is an essential cofactor that probably indirectly interacts with Rev to release HIV RNAs from the perinuclear region to the cytoplasm. This Human immunodeficiency virus type 1 group M subtype A (isolate MAL) (HIV-1) protein is Protein Rev.